The chain runs to 330 residues: Beta-ketoacyl-[acyl-carrier-protein] synthase III (330 aa).

Catalysis depends on residues cysteine 114 and histidine 255. Residues 256–260 (QANQR) are ACP-binding. Asparagine 285 is a catalytic residue.

The protein belongs to the thiolase-like superfamily. FabH family. As to quaternary structure, homodimer.

It is found in the cytoplasm. It carries out the reaction malonyl-[ACP] + acetyl-CoA + H(+) = 3-oxobutanoyl-[ACP] + CO2 + CoA. Its pathway is lipid metabolism; fatty acid biosynthesis. Its function is as follows. Catalyzes the condensation reaction of fatty acid synthesis by the addition to an acyl acceptor of two carbons from malonyl-ACP. Catalyzes the first condensation reaction which initiates fatty acid synthesis and may therefore play a role in governing the total rate of fatty acid production. Possesses both acetoacetyl-ACP synthase and acetyl transacylase activities. Its substrate specificity determines the biosynthesis of branched-chain and/or straight-chain of fatty acids. This chain is Beta-ketoacyl-[acyl-carrier-protein] synthase III, found in Trichormus variabilis (strain ATCC 29413 / PCC 7937) (Anabaena variabilis).